The chain runs to 351 residues: Dihydroorotate dehydrogenase (quinone) (351 aa).

FMN is bound by residues alanine 61–lysine 65 and threonine 85. Lysine 65 serves as a coordination point for substrate. Residue asparagine 110–phenylalanine 114 coordinates substrate. The FMN site is built by asparagine 139 and asparagine 172. Asparagine 172 is a binding site for substrate. Serine 175 (nucleophile) is an active-site residue. Substrate is bound at residue asparagine 177. Residues lysine 217 and threonine 245 each coordinate FMN. Asparagine 246–threonine 247 contacts substrate. FMN is bound by residues glycine 268, glycine 297, and tyrosine 318–threonine 319.

Belongs to the dihydroorotate dehydrogenase family. Type 2 subfamily. As to quaternary structure, monomer. The cofactor is FMN.

It localises to the cell membrane. The catalysed reaction is (S)-dihydroorotate + a quinone = orotate + a quinol. It participates in pyrimidine metabolism; UMP biosynthesis via de novo pathway; orotate from (S)-dihydroorotate (quinone route): step 1/1. Its function is as follows. Catalyzes the conversion of dihydroorotate to orotate with quinone as electron acceptor. In Xylella fastidiosa (strain M12), this protein is Dihydroorotate dehydrogenase (quinone).